A 149-amino-acid polypeptide reads, in one-letter code: Arginine repressor (149 aa).

It belongs to the ArgR family.

It is found in the cytoplasm. It functions in the pathway amino-acid biosynthesis; L-arginine biosynthesis [regulation]. Regulates arginine biosynthesis genes. The chain is Arginine repressor from Bacillus velezensis (strain DSM 23117 / BGSC 10A6 / LMG 26770 / FZB42) (Bacillus amyloliquefaciens subsp. plantarum).